Reading from the N-terminus, the 573-residue chain is DNA polymerase lambda (573 aa).

One can recognise a BRCT domain in the interval E35–L131. 2 disordered regions span residues T126–V204 and T214–A233. Residues K263 to Y277 are DNA-binding. K310 functions as the Schiff-base intermediate with DNA in the catalytic mechanism. A DNA-binding region spans residues G343–T346. DCTP is bound by residues R384, S415–R418, and G424–D427. Residues R418–D427 are involved in primer binding. D425, D427, and D488 together coordinate Mn(2+). The interval E464–Y503 is DNA-binding. Residue N511 participates in dCTP binding.

The protein belongs to the DNA polymerase type-X family. As to quaternary structure, interacts with PCNA. Interacts with PAXX; promoting POLL recruitment to double-strand breaks (DSBs) and stimulation of the end-filling activity of POLL. Interacts with XRCC4; promoting POLL recruitment to double-strand breaks (DSBs) and stimulation of the end-filling activity of POLL. Interacts with NHEJ1/XLF; promoting POLL recruitment to double-strand breaks (DSBs) and stimulation of the end-filling activity of POLL. The cofactor is Mn(2+).

Its subcellular location is the nucleus. It carries out the reaction DNA(n) + a 2'-deoxyribonucleoside 5'-triphosphate = DNA(n+1) + diphosphate. In terms of biological role, DNA polymerase that functions in several pathways of DNA repair. Involved in base excision repair (BER) responsible for repair of lesions that give rise to abasic (AP) sites in DNA. Also contributes to DNA double-strand break repair by non-homologous end joining and homologous recombination. Has both template-dependent and template-independent (terminal transferase) DNA polymerase activities. Also has a 5'-deoxyribose-5-phosphate lyase (dRP lyase) activity. This is DNA polymerase lambda from Mus musculus (Mouse).